The following is a 158-amino-acid chain: Small ribosomal subunit protein uS7 (158 aa).

It belongs to the universal ribosomal protein uS7 family. Part of the 30S ribosomal subunit. Contacts proteins S9 and S11.

In terms of biological role, one of the primary rRNA binding proteins, it binds directly to 16S rRNA where it nucleates assembly of the head domain of the 30S subunit. Is located at the subunit interface close to the decoding center, probably blocks exit of the E-site tRNA. The sequence is that of Small ribosomal subunit protein uS7 from Leptospira biflexa.